A 94-amino-acid chain; its full sequence is Putative regulatory protein Sfum_3631 (94 aa).

The protein belongs to the RemA family.

The chain is Putative regulatory protein Sfum_3631 from Syntrophobacter fumaroxidans (strain DSM 10017 / MPOB).